Reading from the N-terminus, the 461-residue chain is Ornithine decarboxylase (461 aa).

N6-(pyridoxal phosphate)lysine is present on Lys69. Residues Ser200, Gly237, and 274 to 277 (EPGR) contribute to the pyridoxal 5'-phosphate site. The residue at position 303 (Ser303) is a Phosphoserine; by CK2. 331-332 (YD) is a binding site for substrate. The active-site Proton donor; shared with dimeric partner is Cys360. Position 360 is an S-nitrosocysteine; in inhibited form (Cys360). Asp361 contributes to the substrate binding site. Pyridoxal 5'-phosphate is bound at residue Tyr389.

Belongs to the Orn/Lys/Arg decarboxylase class-II family. As to quaternary structure, homodimer. Only the dimer is catalytically active, as the active sites are constructed of residues from both monomers. Does not form a heterodimer with AZIN2. The cofactor is pyridoxal 5'-phosphate. In terms of processing, S-Nitrosylation inhibits the enzyme. S-Nitrosylated in vitro on 4 cysteine residues.

It catalyses the reaction L-ornithine + H(+) = putrescine + CO2. Its pathway is amine and polyamine biosynthesis; putrescine biosynthesis via L-ornithine pathway; putrescine from L-ornithine: step 1/1. With respect to regulation, inhibited by S-nitrosylation. Inhibited by antizymes (AZs) OAZ1, OAZ2 and OAZ3 in response to polyamine levels. AZs inhibit the assembly of the functional homodimer by binding to ODC monomers. Additionally, OAZ1 targets ODC monomers for ubiquitin-independent proteolytic destruction by the 26S proteasome. Inhibited by 1-amino-oxy-3-aminopropane (APA, an isosteric analog of putrescine). Irreversibly inhibited by alpha-difluoromethylornithine (DFMO). Catalyzes the first and rate-limiting step of polyamine biosynthesis that converts ornithine into putrescine, which is the precursor for the polyamines, spermidine and spermine. Polyamines are essential for cell proliferation and are implicated in cellular processes, ranging from DNA replication to apoptosis. This is Ornithine decarboxylase (ODC1) from Homo sapiens (Human).